The following is a 63-amino-acid chain: Bowman-birk type proteinase inhibitor (63 aa).

Disulfide bonds link C7–C61, C8–C23, C11–C57, C13–C21, C31–C38, C35–C50, and C40–C48.

In terms of biological role, inhibits trypsin, chymotrypsin, plasmin and factor XIIa. Does not inhibit factor Xa, thrombin and plasma kallikrein. The protein is Bowman-birk type proteinase inhibitor of Amburana acreana (Cerejeira).